A 320-amino-acid polypeptide reads, in one-letter code: Peroxidase 66 (320 aa).

The first 29 residues, 1 to 29 (MAASVSASCLNRLSSLAVVLVALASAASA), serve as a signal peptide directing secretion. Glutamine 30 carries the pyrrolidone carboxylic acid modification. 4 cysteine pairs are disulfide-bonded: cysteine 40–cysteine 118, cysteine 73–cysteine 78, cysteine 124–cysteine 315, and cysteine 202–cysteine 227. Histidine 71 acts as the Proton acceptor in catalysis. The Ca(2+) site is built by aspartate 72, valine 75, glycine 77, aspartate 79, and serine 81. Asparagine 85 and asparagine 96 each carry an N-linked (GlcNAc...) asparagine glycan. Residue proline 165 participates in substrate binding. Histidine 195 provides a ligand contact to heme b. Threonine 196 lines the Ca(2+) pocket. N-linked (GlcNAc...) asparagine glycosylation occurs at asparagine 211. The Ca(2+) site is built by aspartate 239, threonine 242, and aspartate 247.

This sequence belongs to the peroxidase family. Classical plant (class III) peroxidase subfamily. Heme b is required as a cofactor. Ca(2+) serves as cofactor.

It is found in the secreted. It catalyses the reaction 2 a phenolic donor + H2O2 = 2 a phenolic radical donor + 2 H2O. Its function is as follows. Removal of H(2)O(2), oxidation of toxic reductants, biosynthesis and degradation of lignin, suberization, auxin catabolism, response to environmental stresses such as wounding, pathogen attack and oxidative stress. These functions might be dependent on each isozyme/isoform in each plant tissue. This chain is Peroxidase 66 (PER66), found in Zea mays (Maize).